Consider the following 89-residue polypeptide: Insulin (89 aa).

Disulfide bonds link C7-C75, C19-C88, and C74-C79. A propeptide spans 33–66 (DVGPLSAFRDLEPPLDTEMEDRFPYRQQLAGSKM) (c peptide).

This sequence belongs to the insulin family. In terms of assembly, heterodimer of a B chain and an A chain linked by two disulfide bonds.

It is found in the secreted. In terms of biological role, insulin decreases blood glucose concentration. It increases cell permeability to monosaccharides, amino acids and fatty acids. It accelerates glycolysis, the pentose phosphate cycle, and glycogen synthesis in liver. This is Insulin (ins) from Callorhinchus milii (Ghost shark).